We begin with the raw amino-acid sequence, 353 residues long: Lipase ZK262.3 (353 aa).

Positions 1 to 22 (MPKNLRFSVFLLFLLCINSVFG) are cleaved as a signal peptide. N-linked (GlcNAc...) asparagine glycosylation is found at Asn32 and Asn64. Catalysis depends on Ser163, which acts as the Nucleophile. Asp221 (charge relay system) is an active-site residue. Asn267 carries an N-linked (GlcNAc...) asparagine glycan. Cys277 and Cys288 are joined by a disulfide. The Charge relay system role is filled by His306.

Belongs to the AB hydrolase superfamily. Lipase family.

It localises to the secreted. Functionally, probable lipase. This Caenorhabditis elegans protein is Lipase ZK262.3.